Consider the following 474-residue polypeptide: Glutamine synthetase (474 aa).

One can recognise a GS beta-grasp domain in the interval 15–99 (EDVQFIDVRF…MTFFIHDPIT (85 aa)). Residues 107-474 (PRNIAKKAET…PYEFTLYYDI (368 aa)) form the GS catalytic domain. Mg(2+) contacts are provided by Glu-132 and Glu-134. Glu-210 contributes to the ATP binding site. 2 residues coordinate Mg(2+): Glu-215 and Glu-223. L-glutamate contacts are provided by residues 267-268 (NG) and Gly-268. His-272 serves as a coordination point for Mg(2+). ATP is bound by residues 274-276 (HSS) and Ser-276. Arg-325, Glu-331, and Arg-343 together coordinate L-glutamate. Arg-343, Arg-348, and Lys-357 together coordinate ATP. Glu-362 lines the Mg(2+) pocket. Residue Arg-364 coordinates L-glutamate. The residue at position 402 (Tyr-402) is an O-AMP-tyrosine.

Belongs to the glutamine synthetase family. Oligomer of 12 subunits arranged in the form of two hexagons. It depends on Mg(2+) as a cofactor.

It localises to the cytoplasm. The enzyme catalyses L-glutamate + NH4(+) + ATP = L-glutamine + ADP + phosphate + H(+). The activity of this enzyme could be controlled by adenylation under conditions of abundant glutamine. Functionally, catalyzes the ATP-dependent biosynthesis of glutamine from glutamate and ammonia. The chain is Glutamine synthetase from Frankia alni.